We begin with the raw amino-acid sequence, 255 residues long: Electron transfer flavoprotein subunit beta (255 aa).

N-acetylalanine is present on A2. AMP is bound by residues A9, 39 to 42 (NPFC), C66, and 123 to 134 (GKQAIDDDCNQT). Residues 183–205 (ADLRLNEPRYATLPNIMKAKKKK) are recognition loop. K200 is subject to N6,N6,N6-trimethyllysine; by ETFBKMT; alternate. K200 carries the post-translational modification N6-acetyllysine; alternate. K200 is modified (N6-methyllysine; alternate). K203 carries the post-translational modification N6,N6,N6-trimethyllysine; by ETFBKMT. At K210 the chain carries N6-acetyllysine; alternate. K210 is modified (N6-succinyllysine; alternate). Phosphoserine is present on residues S223 and S226. The residue at position 238 (K238) is an N6-acetyllysine. K248 bears the N6-acetyllysine; alternate mark. K248 carries the post-translational modification N6-succinyllysine; alternate.

This sequence belongs to the ETF beta-subunit/FixA family. As to quaternary structure, heterodimer composed of ETFA and ETFB. Identified in a complex that contains ETFA, ETFB and ETFRF1. Interacts with ACADM. Methylated. Trimethylation at Lys-200 and Lys-203 may negatively regulate the activity in electron transfer from acyl-CoA dehydrogenases.

The protein localises to the mitochondrion matrix. Its function is as follows. Heterodimeric electron transfer flavoprotein that accepts electrons from several mitochondrial dehydrogenases, including acyl-CoA dehydrogenases, glutaryl-CoA and sarcosine dehydrogenase. It transfers the electrons to the main mitochondrial respiratory chain via ETF-ubiquinone oxidoreductase. Required for normal mitochondrial fatty acid oxidation and normal amino acid metabolism. ETFB binds an AMP molecule that probably has a purely structural role. The polypeptide is Electron transfer flavoprotein subunit beta (Mus musculus (Mouse)).